The sequence spans 293 residues: Nucleotide-binding protein OB2468 (293 aa).

14–21 (GMSGAGKT) provides a ligand contact to ATP. A GTP-binding site is contributed by 65–68 (DLRG).

This sequence belongs to the RapZ-like family.

Its function is as follows. Displays ATPase and GTPase activities. The protein is Nucleotide-binding protein OB2468 of Oceanobacillus iheyensis (strain DSM 14371 / CIP 107618 / JCM 11309 / KCTC 3954 / HTE831).